The sequence spans 214 residues: Homologous-pairing protein 2 homolog (214 aa).

The stretch at serine 79–alanine 147 forms a coiled coil. A DNA-binding region spans residues threonine 115–aspartate 179.

The protein belongs to the HOP2 family.

It is found in the nucleus. In terms of biological role, plays an important role in meiotic recombination. Stimulates DMC1-mediated strand exchange required for pairing of homologous chromosomes during meiosis. This Xenopus laevis (African clawed frog) protein is Homologous-pairing protein 2 homolog (psmc3ip).